The chain runs to 370 residues: Holliday junction branch migration complex subunit RuvB 2 (370 aa).

The disordered stretch occupies residues 1–54 (MAIISSRAAGAEDPGQRQQKSSARRRESKLAFARAEGLLQPQAHPSEAQEESLR). Positions 13–214 (DPGQRQQKSS…FGQVQRLRFY (202 aa)) are large ATPase domain (RuvB-L). ATP-binding positions include Leu53, Arg54, Gly95, Lys98, Thr99, Thr100, 161–163 (EDF), Arg204, Tyr214, and Arg251. Thr99 contacts Mg(2+). The small ATPAse domain (RuvB-S) stretch occupies residues 215–285 (EPHELAEIVL…VAAAALELFQ (71 aa)). Residues 288 to 370 (PMGLDWTDRK…TAQSPLPVWS (83 aa)) are head domain (RuvB-H). DNA-binding residues include Arg343 and Arg348.

It belongs to the RuvB family. Homohexamer. Forms an RuvA(8)-RuvB(12)-Holliday junction (HJ) complex. HJ DNA is sandwiched between 2 RuvA tetramers; dsDNA enters through RuvA and exits via RuvB. An RuvB hexamer assembles on each DNA strand where it exits the tetramer. Each RuvB hexamer is contacted by two RuvA subunits (via domain III) on 2 adjacent RuvB subunits; this complex drives branch migration. In the full resolvosome a probable DNA-RuvA(4)-RuvB(12)-RuvC(2) complex forms which resolves the HJ.

Its subcellular location is the cytoplasm. The catalysed reaction is ATP + H2O = ADP + phosphate + H(+). In terms of biological role, the RuvA-RuvB-RuvC complex processes Holliday junction (HJ) DNA during genetic recombination and DNA repair, while the RuvA-RuvB complex plays an important role in the rescue of blocked DNA replication forks via replication fork reversal (RFR). RuvA specifically binds to HJ cruciform DNA, conferring on it an open structure. The RuvB hexamer acts as an ATP-dependent pump, pulling dsDNA into and through the RuvAB complex. RuvB forms 2 homohexamers on either side of HJ DNA bound by 1 or 2 RuvA tetramers; 4 subunits per hexamer contact DNA at a time. Coordinated motions by a converter formed by DNA-disengaged RuvB subunits stimulates ATP hydrolysis and nucleotide exchange. Immobilization of the converter enables RuvB to convert the ATP-contained energy into a lever motion, pulling 2 nucleotides of DNA out of the RuvA tetramer per ATP hydrolyzed, thus driving DNA branch migration. The RuvB motors rotate together with the DNA substrate, which together with the progressing nucleotide cycle form the mechanistic basis for DNA recombination by continuous HJ branch migration. Branch migration allows RuvC to scan DNA until it finds its consensus sequence, where it cleaves and resolves cruciform DNA. In Synechococcus sp. (strain JA-3-3Ab) (Cyanobacteria bacterium Yellowstone A-Prime), this protein is Holliday junction branch migration complex subunit RuvB 2.